The chain runs to 227 residues: Cytochrome c oxidase subunit 2 (227 aa).

Over 1–14 (MAHPAQLGFQDAAS) the chain is Mitochondrial intermembrane. The chain crosses the membrane as a helical span at residues 15–45 (PIMEELMYFHDHTLMIVFLISSLVLYIISLM). The Mitochondrial matrix portion of the chain corresponds to 46 to 59 (LTTELTHTSTMDAQ). The chain crosses the membrane as a helical span at residues 60–87 (EVETVWTILPAVILILIALPSLRILYMM). Residues 88–227 (DEITTPSLTL…HFEEWLLSTL (140 aa)) are Mitochondrial intermembrane-facing. Cu cation-binding residues include His161, Cys196, Glu198, Cys200, His204, and Met207. Glu198 serves as a coordination point for Mg(2+).

This sequence belongs to the cytochrome c oxidase subunit 2 family. In terms of assembly, component of the cytochrome c oxidase (complex IV, CIV), a multisubunit enzyme composed of 14 subunits. The complex is composed of a catalytic core of 3 subunits MT-CO1, MT-CO2 and MT-CO3, encoded in the mitochondrial DNA, and 11 supernumerary subunits COX4I, COX5A, COX5B, COX6A, COX6B, COX6C, COX7A, COX7B, COX7C, COX8 and NDUFA4, which are encoded in the nuclear genome. The complex exists as a monomer or a dimer and forms supercomplexes (SCs) in the inner mitochondrial membrane with NADH-ubiquinone oxidoreductase (complex I, CI) and ubiquinol-cytochrome c oxidoreductase (cytochrome b-c1 complex, complex III, CIII), resulting in different assemblies (supercomplex SCI(1)III(2)IV(1) and megacomplex MCI(2)III(2)IV(2)). Found in a complex with TMEM177, COA6, COX18, COX20, SCO1 and SCO2. Interacts with TMEM177 in a COX20-dependent manner. Interacts with COX20. Interacts with COX16. It depends on Cu cation as a cofactor.

It is found in the mitochondrion inner membrane. The catalysed reaction is 4 Fe(II)-[cytochrome c] + O2 + 8 H(+)(in) = 4 Fe(III)-[cytochrome c] + 2 H2O + 4 H(+)(out). Functionally, component of the cytochrome c oxidase, the last enzyme in the mitochondrial electron transport chain which drives oxidative phosphorylation. The respiratory chain contains 3 multisubunit complexes succinate dehydrogenase (complex II, CII), ubiquinol-cytochrome c oxidoreductase (cytochrome b-c1 complex, complex III, CIII) and cytochrome c oxidase (complex IV, CIV), that cooperate to transfer electrons derived from NADH and succinate to molecular oxygen, creating an electrochemical gradient over the inner membrane that drives transmembrane transport and the ATP synthase. Cytochrome c oxidase is the component of the respiratory chain that catalyzes the reduction of oxygen to water. Electrons originating from reduced cytochrome c in the intermembrane space (IMS) are transferred via the dinuclear copper A center (CU(A)) of subunit 2 and heme A of subunit 1 to the active site in subunit 1, a binuclear center (BNC) formed by heme A3 and copper B (CU(B)). The BNC reduces molecular oxygen to 2 water molecules using 4 electrons from cytochrome c in the IMS and 4 protons from the mitochondrial matrix. The chain is Cytochrome c oxidase subunit 2 (MT-CO2) from Microcebus tavaratra (Northern rufous mouse lemur).